The primary structure comprises 296 residues: Probable AP endonuclease (296 aa).

A disulfide bridge connects residues Cys-16 and Cys-20. The Zn(2+) site is built by His-78, His-115, Glu-142, His-182, His-218, Asp-231, His-233, and Glu-271.

This sequence belongs to the AP endonuclease 2 family. Requires Zn(2+) as cofactor.

It is found in the host nucleus. The protein localises to the host cytoplasm. Its subcellular location is the virion. Its function is as follows. Endonuclease that plays a role in DNA repair. Cleaves phosphodiester bonds on the 5' side of apurinic or apyrimidinic sites (AP sites). In addition to endonuclease activity, the ASFV enzyme has a proofreading 3'-5' exonuclease activity that is considerably more efficient in the elimination of a mismatch than in that of a correctly paired base. Displays 3'-phosphatase and 3'-repair diesterase activities. The single nucleotide gaps generated by the AP endonuclease are filled by the viral AP endonuclease and DNA ligase. The chain is Probable AP endonuclease from Ornithodoros (relapsing fever ticks).